Consider the following 557-residue polypeptide: DNA ligase B (557 aa).

Lysine 125 acts as the N6-AMP-lysine intermediate in catalysis.

It belongs to the NAD-dependent DNA ligase family. LigB subfamily.

It catalyses the reaction NAD(+) + (deoxyribonucleotide)n-3'-hydroxyl + 5'-phospho-(deoxyribonucleotide)m = (deoxyribonucleotide)n+m + AMP + beta-nicotinamide D-nucleotide.. Catalyzes the formation of phosphodiester linkages between 5'-phosphoryl and 3'-hydroxyl groups in double-stranded DNA using NAD as a coenzyme and as the energy source for the reaction. This Pseudomonas entomophila (strain L48) protein is DNA ligase B.